The chain runs to 391 residues: Immediate-early protein 2 (391 aa).

Belongs to the herpesviridae US22 family.

The protein localises to the host cytoplasm. It localises to the host nucleus. In terms of biological role, involved in the reactivation of latent MCMV in spleen cells. The polypeptide is Immediate-early protein 2 (IE2) (Murid herpesvirus 1 (strain Smith) (MuHV-1)).